The sequence spans 127 residues: Large ribosomal subunit protein bL20 (127 aa).

The protein belongs to the bacterial ribosomal protein bL20 family.

Its function is as follows. Binds directly to 23S ribosomal RNA and is necessary for the in vitro assembly process of the 50S ribosomal subunit. It is not involved in the protein synthesizing functions of that subunit. The polypeptide is Large ribosomal subunit protein bL20 (Corynebacterium urealyticum (strain ATCC 43042 / DSM 7109)).